A 114-amino-acid chain; its full sequence is Iron-sulfur cluster insertion protein ErpA (114 aa).

Residues cysteine 42, cysteine 106, and cysteine 108 each contribute to the iron-sulfur cluster site.

It belongs to the HesB/IscA family. In terms of assembly, homodimer. Iron-sulfur cluster serves as cofactor.

Functionally, required for insertion of 4Fe-4S clusters for at least IspG. This Pasteurella multocida (strain Pm70) protein is Iron-sulfur cluster insertion protein ErpA.